Here is a 430-residue protein sequence, read N- to C-terminus: Glutamate-1-semialdehyde 2,1-aminomutase (430 aa).

Lysine 270 bears the N6-(pyridoxal phosphate)lysine mark.

Belongs to the class-III pyridoxal-phosphate-dependent aminotransferase family. HemL subfamily. As to quaternary structure, homodimer. The cofactor is pyridoxal 5'-phosphate.

Its subcellular location is the cytoplasm. The catalysed reaction is (S)-4-amino-5-oxopentanoate = 5-aminolevulinate. It functions in the pathway porphyrin-containing compound metabolism; protoporphyrin-IX biosynthesis; 5-aminolevulinate from L-glutamyl-tRNA(Glu): step 2/2. In Cupriavidus metallidurans (strain ATCC 43123 / DSM 2839 / NBRC 102507 / CH34) (Ralstonia metallidurans), this protein is Glutamate-1-semialdehyde 2,1-aminomutase.